The following is a 507-amino-acid chain: Archaeal-type glutamate synthase [NADPH] (507 aa).

4Fe-4S ferredoxin-type domains lie at 10–39 and 41–70; these read FVVE…YDEN and NRVY…VRRN. Positions 19, 22, 25, 29, 50, 53, 56, and 60 each coordinate [4Fe-4S] cluster.

Belongs to the glutamate synthase family. Requires FMN as cofactor.

The enzyme catalyses 2 L-glutamate + NADP(+) = L-glutamine + 2-oxoglutarate + NADPH + H(+). The chain is Archaeal-type glutamate synthase [NADPH] from Thermotoga neapolitana (strain ATCC 49049 / DSM 4359 / NBRC 107923 / NS-E).